A 2448-amino-acid polypeptide reads, in one-letter code: Non-reducing polyketide synthase mapC (2448 aa).

Positions 14–226 (VLFGPQCPDI…HHEAHREGIQ (213 aa)) are N-terminal acylcarrier protein transacylase domain (SAT). The interval 330-350 (GFSNESPQPSTASLSNSVQTF) is disordered. One can recognise a Ketosynthase family 3 (KS3) domain in the interval 359–775 (ASPIAITGMA…GSNAALIVKE (417 aa)). Active-site for beta-ketoacyl synthase activity residues include cysteine 524, histidine 659, and histidine 698. The interval 885–1188 (LCFGGQNGLT…HKIDLGGSSG (304 aa)) is malonyl-CoA:ACP transacylase (MAT) domain. Residue serine 972 is the For acyl/malonyl transferase activity of the active site. Residues 1256–1388 (GQEAGLLCQL…GTVCLHQERS (133 aa)) form an N-terminal hotdog fold region. Residues 1256 to 1565 (GQEAGLLCQL…FTSVSIRSLT (310 aa)) enclose the PKS/mFAS DH domain. The segment at 1261–1564 (LLCQLSESPD…RFTSVSIRSL (304 aa)) is product template (PT) domain. The Proton acceptor; for dehydratase activity role is filled by histidine 1290. The interval 1414 to 1565 (ASNGLKGSTV…FTSVSIRSLT (152 aa)) is C-terminal hotdog fold. The active-site Proton donor; for dehydratase activity is aspartate 1471. Residues 1610–1684 (AKDLATVQEM…GLVEHIFPGH (75 aa)) enclose the Carrier domain. At serine 1644 the chain carries O-(pantetheine 4'-phosphoryl)serine. A methyltransferase (CMeT) domain region spans residues 1841–2076 (PYALEHDLLQ…GFEWVDWTNN (236 aa)). Residues serine 2227, aspartate 2385, and histidine 2417 each act as for thioesterase activity in the active site.

The protein resides in the cytoplasm. The protein localises to the cytosol. The catalysed reaction is 3 malonyl-CoA + acetyl-CoA + S-adenosyl-L-methionine + H(+) = 5-methylorsellinate + S-adenosyl-L-homocysteine + 3 CO2 + 4 CoA. The protein operates within secondary metabolite biosynthesis; terpenoid biosynthesis. Its function is as follows. Non-reducing polyketide synthase; part of the gene cluster that mediates the biosynthesis of mycophenolic acid (MPA), the first isolated antibiotic natural product in the world obtained from a culture of Penicillium brevicompactum in 1893. MpaC catalyzes the synthesis of 5-methylorsellinic acid (5MOA) via the condensation of 1 acetyl-CoA starter unit with 3 malonyl-CoA units and one methylation step. The first step of the pathway is the synthesis of 5-methylorsellinic acid (5MOA) by the cytosolic polyketide synthase mpaC. 5MOA is then converted to the phthalide compound 5,7-dihydroxy-4,6-dimethylphthalide (DHMP) by the endoplasmic reticulum-bound cytochrome P450 monooxygenase mpaDE. MpaDE first catalyzes hydroxylation of 5-MOA to 4,6-dihydroxy-2-(hydroxymethyl)-3-methylbenzoic acid (DHMB). MpaDE then acts as a lactone synthase that catalyzes the ring closure to convert DHMB into DHMP. The next step is the prenylation of DHMP by the Golgi apparatus-associated prenyltransferase mpaA to yield farnesyl-DHMP (FDHMP). The ER-bound oxygenase mpaB then mediates the oxidative cleavage the C19-C20 double bond in FDHMP to yield FDHMP-3C via a mycophenolic aldehyde intermediate. The O-methyltransferase mpaG catalyzes the methylation of FDHMP-3C to yield MFDHMP-3C. After the cytosolic methylation of FDHMP-3C, MFDHMP-3C enters into peroxisomes probably via free diffusion due to its low molecular weight. Upon a peroxisomal CoA ligation reaction, catalyzed by a beta-oxidation component enzyme acyl-CoA ligase ACL891, MFDHMP-3C-CoA would then be restricted to peroxisomes for the following beta-oxidation pathway steps. The peroxisomal beta-oxidation machinery than converts MFDHMP-3C-CoA into MPA_CoA, via a beta-oxidation chain-shortening process. Finally mpaH acts as a peroxisomal acyl-CoA hydrolase with high substrate specificity toward MPA-CoA to release the final product MPA. This Penicillium brevicompactum protein is Non-reducing polyketide synthase mapC.